A 396-amino-acid polypeptide reads, in one-letter code: NADH-quinone oxidoreductase subunit D 1 (396 aa).

Belongs to the complex I 49 kDa subunit family. NDH-1 is composed of 14 different subunits. Subunits NuoB, C, D, E, F, and G constitute the peripheral sector of the complex.

Its subcellular location is the cell inner membrane. It carries out the reaction a quinone + NADH + 5 H(+)(in) = a quinol + NAD(+) + 4 H(+)(out). Functionally, NDH-1 shuttles electrons from NADH, via FMN and iron-sulfur (Fe-S) centers, to quinones in the respiratory chain. The immediate electron acceptor for the enzyme in this species is believed to be ubiquinone. Couples the redox reaction to proton translocation (for every two electrons transferred, four hydrogen ions are translocated across the cytoplasmic membrane), and thus conserves the redox energy in a proton gradient. This Beijerinckia indica subsp. indica (strain ATCC 9039 / DSM 1715 / NCIMB 8712) protein is NADH-quinone oxidoreductase subunit D 1.